Reading from the N-terminus, the 444-residue chain is UDP-N-acetylmuramate--L-alanine ligase (444 aa).

111–117 contributes to the ATP binding site; that stretch reads GAHGKTS.

This sequence belongs to the MurCDEF family.

Its subcellular location is the cytoplasm. The catalysed reaction is UDP-N-acetyl-alpha-D-muramate + L-alanine + ATP = UDP-N-acetyl-alpha-D-muramoyl-L-alanine + ADP + phosphate + H(+). Its pathway is cell wall biogenesis; peptidoglycan biosynthesis. Functionally, cell wall formation. The protein is UDP-N-acetylmuramate--L-alanine ligase of Leuconostoc mesenteroides subsp. mesenteroides (strain ATCC 8293 / DSM 20343 / BCRC 11652 / CCM 1803 / JCM 6124 / NCDO 523 / NBRC 100496 / NCIMB 8023 / NCTC 12954 / NRRL B-1118 / 37Y).